The primary structure comprises 274 residues: Diaminopimelate epimerase (274 aa).

Substrate-binding residues include Asn-11 and Asn-60. The active-site Proton donor is Cys-69. Residues 70–71 (GN), Asn-191, and 209–210 (ER) contribute to the substrate site. Residue Cys-218 is the Proton acceptor of the active site. 219 to 220 (GS) is a binding site for substrate.

Belongs to the diaminopimelate epimerase family. In terms of assembly, homodimer.

The protein localises to the cytoplasm. The catalysed reaction is (2S,6S)-2,6-diaminopimelate = meso-2,6-diaminopimelate. The protein operates within amino-acid biosynthesis; L-lysine biosynthesis via DAP pathway; DL-2,6-diaminopimelate from LL-2,6-diaminopimelate: step 1/1. In terms of biological role, catalyzes the stereoinversion of LL-2,6-diaminopimelate (L,L-DAP) to meso-diaminopimelate (meso-DAP), a precursor of L-lysine and an essential component of the bacterial peptidoglycan. This is Diaminopimelate epimerase from Caldanaerobacter subterraneus subsp. tengcongensis (strain DSM 15242 / JCM 11007 / NBRC 100824 / MB4) (Thermoanaerobacter tengcongensis).